We begin with the raw amino-acid sequence, 60 residues long: Large ribosomal subunit protein uL30 (60 aa).

The protein belongs to the universal ribosomal protein uL30 family. Part of the 50S ribosomal subunit.

This chain is Large ribosomal subunit protein uL30, found in Flavobacterium johnsoniae (strain ATCC 17061 / DSM 2064 / JCM 8514 / BCRC 14874 / CCUG 350202 / NBRC 14942 / NCIMB 11054 / UW101) (Cytophaga johnsonae).